Here is a 156-residue protein sequence, read N- to C-terminus: MRVFEGRYYGEGLKIAIVISRFNSAVTKELLDGALDALKRHEVKDENIDVIWVPGAMEIPHITRSIALKKKHDAIIALGAVIRGETYHFDVVANEVSKGIAAINLEVDVPVSFGIITSDTVEQALNRAGIKSGNKGFEAAMVALEMANLKRQIEAI.

Residues Phe22, 56–58 (AME), and 80–82 (AVI) contribute to the 5-amino-6-(D-ribitylamino)uracil site. (2S)-2-hydroxy-3-oxobutyl phosphate is bound at residue 85–86 (ET). His88 acts as the Proton donor in catalysis. Phe113 serves as a coordination point for 5-amino-6-(D-ribitylamino)uracil. Position 127 (Arg127) interacts with (2S)-2-hydroxy-3-oxobutyl phosphate.

It belongs to the DMRL synthase family.

It catalyses the reaction (2S)-2-hydroxy-3-oxobutyl phosphate + 5-amino-6-(D-ribitylamino)uracil = 6,7-dimethyl-8-(1-D-ribityl)lumazine + phosphate + 2 H2O + H(+). Its pathway is cofactor biosynthesis; riboflavin biosynthesis; riboflavin from 2-hydroxy-3-oxobutyl phosphate and 5-amino-6-(D-ribitylamino)uracil: step 1/2. Catalyzes the formation of 6,7-dimethyl-8-ribityllumazine by condensation of 5-amino-6-(D-ribitylamino)uracil with 3,4-dihydroxy-2-butanone 4-phosphate. This is the penultimate step in the biosynthesis of riboflavin. The polypeptide is 6,7-dimethyl-8-ribityllumazine synthase (Kosmotoga olearia (strain ATCC BAA-1733 / DSM 21960 / TBF 19.5.1)).